Reading from the N-terminus, the 428-residue chain is C4-dicarboxylate transport protein (428 aa).

8 helical membrane passes run 8–28 (SLYF…HFYP), 44–64 (LIKM…IAGM), 76–96 (VALL…LIIV), 142–162 (IGAF…LFGF), 184–204 (VIFG…FGAM), 222–242 (LIIC…GSIA), 326–346 (IFHQ…AAGV), and 352–372 (IVLA…LALI).

Belongs to the dicarboxylate/amino acid:cation symporter (DAACS) (TC 2.A.23) family.

The protein localises to the cell inner membrane. Its function is as follows. Responsible for the transport of dicarboxylates such as succinate, fumarate, and malate from the periplasm across the membrane. The chain is C4-dicarboxylate transport protein from Enterobacter sp. (strain 638).